The sequence spans 171 residues: Prolyl-tRNA synthetase associated domain-containing protein 1 (171 aa).

The protein belongs to the PRORSD1 family.

The chain is Prolyl-tRNA synthetase associated domain-containing protein 1 (PRORSD1) from Bos taurus (Bovine).